Here is a 217-residue protein sequence, read N- to C-terminus: Protein-L-isoaspartate O-methyltransferase (217 aa).

Residue Ser-64 is part of the active site.

This sequence belongs to the methyltransferase superfamily. L-isoaspartyl/D-aspartyl protein methyltransferase family.

It is found in the cytoplasm. It carries out the reaction [protein]-L-isoaspartate + S-adenosyl-L-methionine = [protein]-L-isoaspartate alpha-methyl ester + S-adenosyl-L-homocysteine. Functionally, catalyzes the methyl esterification of L-isoaspartyl residues in peptides and proteins that result from spontaneous decomposition of normal L-aspartyl and L-asparaginyl residues. It plays a role in the repair and/or degradation of damaged proteins. This chain is Protein-L-isoaspartate O-methyltransferase, found in Nitrobacter winogradskyi (strain ATCC 25391 / DSM 10237 / CIP 104748 / NCIMB 11846 / Nb-255).